The primary structure comprises 564 residues: Solute carrier family 22 member 21 (564 aa).

At 1–20 (MLDYDEVTAFLGEWGTFQRL) the chain is on the cytoplasmic side. A helical membrane pass occupies residues 21–41 (IFFLLSASIIPNGFTGLSAVF). Over 42–142 (LTAIPEHRCR…DLVCKDDWKA (101 aa)) the chain is Extracellular. N-linked (GlcNAc...) asparagine glycosylation is found at Asn57, Asn64, and Asn91. Residues 143–163 (PLTTSFFYVGVLLGSFISGQL) traverse the membrane as a helical segment. At 164–172 (SDRFGRKNI) the chain is on the cytoplasmic side. A helical transmembrane segment spans residues 173-193 (LFLTMAMHTGFSFIQVFSVNF). The Extracellular portion of the chain corresponds to 194–197 (EMFT). Residues 198–218 (LLYTLVGMGHISNYVAAFVLG) traverse the membrane as a helical segment. Position 218–225 (218–225 (GTEMLSKS)) interacts with ATP. At 219 to 232 (TEMLSKSVRIIFAT) the chain is on the cytoplasmic side. The helical transmembrane segment at 233-253 (LGVCIFFAFGFMVLPLFAYFI) threads the bilayer. Topologically, residues 254–257 (REWR) are extracellular. The chain crosses the membrane as a helical span at residues 258–278 (RLLLAITLPGVLCGALWWFIP). The Cytoplasmic portion of the chain corresponds to 279 to 344 (ESPRWLISQG…YDLVRTPNIR (66 aa)). A helical transmembrane segment spans residues 345-365 (ILTIMSIILWLTISVGYFGLS). Residues 366–376 (LDTPNLNGNIY) lie on the Extracellular side of the membrane. The chain crosses the membrane as a helical span at residues 377-397 (VNCFLLAAVEVPAYVLAWLLL). Residues 398–409 (QHVSRRYSMAGS) are Cytoplasmic-facing. The helical transmembrane segment at 410–430 (LFLGGSVLLLVQLVPSDLHYL) threads the bilayer. Residues 431 to 433 (STT) lie on the Extracellular side of the membrane. The chain crosses the membrane as a helical span at residues 434–454 (LVMVGKFGITSAYSMVYVYTA). At 455–465 (ELYPTVVRNMG) the chain is on the cytoplasmic side. Residues 466–486 (VGVSSTASRLGSILSPYFVYL) form a helical membrane-spanning segment. The Extracellular portion of the chain corresponds to 487-491 (GAYDR). The helical transmembrane segment at 492–512 (RLPYILMGSLTILTAIITLFF) threads the bilayer. The Cytoplasmic segment spans residues 513–564 (PESSGVSLPETIDEMQKVKKLKQRQSLSKKGSPKESKGNVSRTSRTSEPKGF). The segment at 532–564 (KLKQRQSLSKKGSPKESKGNVSRTSRTSEPKGF) is disordered.

This sequence belongs to the major facilitator (TC 2.A.1) superfamily. Organic cation transporter (TC 2.A.1.19) family. In terms of tissue distribution, predominantly expressed in testis.

It is found in the peroxisome membrane. In terms of biological role, sodium-ion independent, medium affinity carnitine transporter. Also transports organic cations such as tetraethylammonium (TEA) without the involvement of sodium. Relative uptake activity ratio of carnitine to TEA is 746. This chain is Solute carrier family 22 member 21 (Slc22a21), found in Mus musculus (Mouse).